The following is a 1386-amino-acid chain: Pleckstrin homology domain-containing family G member 2 (1386 aa).

2 disordered regions span residues 1–21 (MPEGAQGLSLSKPSPSLGCGR) and 36–82 (TAPA…PLPG). Low complexity-rich tracts occupy residues 8–17 (LSLSKPSPSL) and 45–62 (SPRGSGSSTSLSTVGSEG). S90 carries the post-translational modification Phosphoserine. A DH domain is found at 102–283 (RLERVAREIV…TAVAWYINDM (182 aa)). Residues 313–411 (ELVLEGAFRG…WIHCLQRLFF (99 aa)) form the PH domain. Disordered stretches follow at residues 436–540 (KSKP…PSGT), 554–612 (GLRD…PSPL), 701–739 (EPAEAPATRRELFSGSNPGKLGEPPSGGKAGPEEDEEGV), 790–815 (ILEDSDLGGDSGSGKAGAPSSERTAS), and 829–859 (QQMQRAETRASANAPRRRPRVLAQPQPSPCL). T445 is subject to Phosphothreonine. A phosphoserine mark is found at S450 and S469. Residues 592 to 603 (SEEEEEEEEGLE) show a composition bias toward acidic residues. Phosphoserine is present on residues S911 and S1049. Disordered stretches follow at residues 1037–1099 (PVPK…PLPC) and 1162–1191 (TSPKQGSLPDIQGPAAAPPLPEPSLTDTQV). Polar residues-rich tracts occupy residues 1048–1059 (ESPTNIPLTKQG) and 1073–1086 (QPIQPLSWHGSSLD). T1257 is subject to Phosphothreonine. S1261 and S1310 each carry phosphoserine. Disordered regions lie at residues 1291–1333 (ARRQ…ARRL) and 1367–1386 (TQESMGLHRAQGAPDAPFHM). Positions 1301 to 1317 (PAASRGSWSSAPTSRAS) are enriched in low complexity. The span at 1318-1330 (SPPPQPQPPPPPA) shows a compositional bias: pro residues.

Functionally, may be a transforming oncogene with exchange activity for CDC42. May be a guanine-nucleotide exchange factor (GEF) for RAC1 and CDC42. Activated by the binding to subunits beta and gamma of the heterotrimeric guanine nucleotide-binding protein (G protein). Involved in the regulation of actin polymerization. In Homo sapiens (Human), this protein is Pleckstrin homology domain-containing family G member 2 (PLEKHG2).